Here is a 187-residue protein sequence, read N- to C-terminus: MDLDKIGAETRQILQDVLDKASLDEGDVFVLGLSSSEVMGGHIGRNSSLEVGQVIVKTVLDILEEKGIFLAVQGCEHLNRALVVERSLAKKKDLEIVNVLPTLHAGGSGQLAAFQYMKDPVEVEFIVAQAGLDIGDTAIGMHVKHVQIPIRPKLKSVGAAHVTALASRPKLIGGSRAAYREDKIRKD.

Belongs to the UPF0340 family.

The polypeptide is UPF0340 protein SGO_0411 (Streptococcus gordonii (strain Challis / ATCC 35105 / BCRC 15272 / CH1 / DL1 / V288)).